Here is a 1604-residue protein sequence, read N- to C-terminus: Metabotropic glutamate receptor-like protein R (1604 aa).

The first 27 residues, 1-27, serve as a signal peptide directing secretion; that stretch reads MVIKKPFIFIFICFLICLLICIDLTNC. Topologically, residues 28–1149 are extracellular; sequence NTINNNNNNN…TDVSKTKIAK (1122 aa). A compositionally biased stretch (low complexity) spans 38–69; it reads NNNNNNNNNNNNNNNNNNNNNNNNNNNNNNDN. Residues 38–72 are disordered; sequence NNNNNNNNNNNNNNNNNNNNNNNNNNNNNNDNNEN. Residues 98–133 are a coiled coil; sequence DFYINKIKKEIKDREKYKNNIENEILKINSQKKRKK. Residues 213–263 form a disordered region; sequence NNNNNNNNNNNNNNNNNNKNNNNNNNNKNNNNNNNNKNNNNNNNNKNNNKN. N-linked (GlcNAc...) asparagine glycosylation is found at N285, N327, N359, N375, N489, N498, N525, N577, N593, N624, N768, N837, N841, N851, N864, N876, N885, N888, N913, N967, N991, N1097, and N1109. A helical membrane pass occupies residues 1150–1170; that stretch reads IIIGISAIIVSIGVLITAILT. Over 1171–1184 the chain is Cytoplasmic; that stretch reads FIYRKRKIMRYSNP. Residues 1185 to 1205 form a helical membrane-spanning segment; the sequence is VFLLIILVGCVCGLVSTFVSF. The Extracellular segment spans residues 1206–1211; the sequence is STTSAT. A helical membrane pass occupies residues 1212–1232; that stretch reads CSIRMVLIPLFFFIITSAIFI. The Cytoplasmic portion of the chain corresponds to 1233–1256; that stretch reads KQYRVYCLIRGVEELHDMSIENSY. The chain crosses the membrane as a helical span at residues 1257 to 1277; that stretch reads LLKLQSFILIIPAILIAVSVI. Over 1278–1304 the chain is Extracellular; sequence ATRMHRKYNFDLQKETIQAYCYSKNFY. A helical membrane pass occupies residues 1305–1325; the sequence is IIFICLALYEFSILLYGCWIV. The Cytoplasmic segment spans residues 1326–1340; it reads IKCRQYRSFPGSFNE. The helical transmembrane segment at 1341–1361 threads the bilayer; sequence FFYIGVLIYVLTVILVVSIPI. Residues 1362-1372 lie on the Extracellular side of the membrane; the sequence is GFALLNSALTD. A helical transmembrane segment spans residues 1373-1393; sequence FLLYSIPILVLIVAIIGLLFA. Residues 1394–1604 are Cytoplasmic-facing; it reads PKFYFLFRTD…KSSQNSPLLD (211 aa). The interval 1457–1604 is disordered; sequence TGSNTSDDVS…KSSQNSPLLD (148 aa). Composition is skewed to low complexity over residues 1471 to 1527 and 1534 to 1556; these read FDSP…NKNN and SSSNSSSTADFEISSSGESGRSS. Positions 1563-1572 are enriched in basic residues; that stretch reads NNKKNRRKNS. Residues 1573–1584 are compositionally biased toward polar residues; sequence LRTPILNSLLSP.

It belongs to the G-protein coupled receptor 3 family. GABA-B receptor subfamily.

The protein localises to the membrane. In Dictyostelium discoideum (Social amoeba), this protein is Metabotropic glutamate receptor-like protein R (grlR).